The following is a 981-amino-acid chain: Protein deadlock (981 aa).

The tract at residues 1–60 is required for interaction with rhi/rhino; it reads MEKLDKIRMSQKLSCWQHILTTLGTSSKTEQEWNTFFKGFLESWRKPYCIQTSCDPSIPL. 6 disordered regions span residues 72-195, 274-307, 327-352, 375-446, 554-586, and 642-662; these read LQEN…ACAP, IMDK…DDQL, SRNE…NKKE, LRKS…PNNI, GLDD…ETLK, and LVHQ…TAAR. Polar residues-rich tracts occupy residues 104 to 113 and 150 to 160; these read PSKSHSTGST and NHTTSIFSKAQ. Residues 167-191 show a composition bias toward basic and acidic residues; the sequence is KLSSTKKRPDTCAPTDDSRKNREPR. The span at 337–352 shows a compositional bias: basic and acidic residues; it reads EKVKLKGERPAQNKKE. The span at 377 to 390 shows a compositional bias: basic residues; the sequence is KSVKKSAKQQKPRV. Basic and acidic residues predominate over residues 409–419; that stretch reads TQDKQSTHEMI. Residues 422–446 show a composition bias toward polar residues; sequence QAKTISEASGQQTSQVQSSLSPNNI. The span at 652-662 shows a compositional bias: basic and acidic residues; that stretch reads RNQRDEATAAR.

As to quaternary structure, component of the Rhino-Deadlock-Cutoff (RDC) complex, composed of rhi/rhino, del/deadlock and cuff/cutoff. Interacts (via N-terminus) with rhi/rhino (via C-terminus); this interaction is direct. Interacts (via C-terminus) with cuff/cutoff; this interaction is direct.

The protein localises to the nucleus. Its subcellular location is the cytoplasm. It localises to the cytoskeleton. It is found in the microtubule organizing center. The protein resides in the centrosome. The protein localises to the chromosome. Developmental protein involved in oogenesis. Required for germline maintenance, stability of mitotic spindles, localization of patterning determinants, oocyte growth and fusome biogenesis in males and females. Also required for dorso-ventral and antero-posterior patterning of oocyte and eggshell. May be involved in microtubule function during oogenesis. Part of a rhi-dependent transcription machinery that enables the generation of piRNA precursors from heterochromatin while maintaining the suppression of transposon-encoded promoters and enhancers. Component of the RDC complex (rhi, del and cuff) which binds to repressive H3K9me3 marks in the piRNA clusters. RDC promotes the bidirectional transcription of piRNA clusters at these sites by interacting with Moonshiner which forms a complex with the transcription initiation factors TfIIA-S and Trf2. This mechanism allows transcription to occur in piRNA clusters despite the lack of proper promoter elements and in the presence of the repressive H3K9me3 mark. As part of the RDC complex, involved in suppression of splicing. This Drosophila melanogaster (Fruit fly) protein is Protein deadlock (del).